The primary structure comprises 599 residues: MDKKNIRNFSIIAHIDHGKSTLSDRLIEITETVSKREMKNQLLDSMELERERGITIKLNAVQLKFKRNNQDYTFHLIDTPGHVDFTYEVSRSLAACEAALLVVDATQGVQAQTLSNVYLALENNLEIIPVINKVDLPSADVERVKREIETKIGIDCSDVPLISAKTGLNIDQVLDVIIKKVPSPKNANDNDPLKALIFDSYYDPHKGVVCFIRIFDGKLKVGDEILFMANNVKYIVTEVGIKNPNMQSRAYLEAGEVGYVTASIKTIRDVHVGDTITNANNPCDKPLVGYRKVSSMVYAGLYPVDTADYQNLKVAMEKIVLTDAALEYEYETSNALGFGVRCGFLGLLHMDVIRERIVREYNIPLILLAPSVMYKCYLTDGQELKVDNPANMPERNRIKSMLEPYVKLSISTPDEFIGPIMELCQNFRGEYMELSEIDSSRKVLVYEIPLAEIIYSFFDKLKSVTKGYASLDYELIGYRDSNLVKVDILLNGQKVDALSFISHTQFVYQKAKKIVEKLKTLIPRHLFEIPIQAAVGSKIISRETIKAMRKNVLAKCYGGDVSRKKKLLEQQKEGKKRLKAIGSVQIPQETFSKLLQDDE.

The tr-type G domain occupies 4-185 (KNIRNFSIIA…VIIKKVPSPK (182 aa)). GTP-binding positions include 16-21 (DHGKST) and 132-135 (NKVD).

This sequence belongs to the TRAFAC class translation factor GTPase superfamily. Classic translation factor GTPase family. LepA subfamily.

It is found in the cell membrane. The catalysed reaction is GTP + H2O = GDP + phosphate + H(+). Its function is as follows. Required for accurate and efficient protein synthesis under certain stress conditions. May act as a fidelity factor of the translation reaction, by catalyzing a one-codon backward translocation of tRNAs on improperly translocated ribosomes. Back-translocation proceeds from a post-translocation (POST) complex to a pre-translocation (PRE) complex, thus giving elongation factor G a second chance to translocate the tRNAs correctly. Binds to ribosomes in a GTP-dependent manner. In Mycoplasmoides gallisepticum (strain R(low / passage 15 / clone 2)) (Mycoplasma gallisepticum), this protein is Elongation factor 4.